A 314-amino-acid chain; its full sequence is Melanoma-associated antigen 2 (314 aa).

A compositionally biased stretch (basic and acidic residues) spans 1–20 (MPLEQRSQHCKPEEGLEARG). The disordered stretch occupies residues 1-69 (MPLEQRSQHC…SPPHSPQGAS (69 aa)). Residues 21-44 (EALGLVGAQAPATEEQQTASSSST) are compositionally biased toward low complexity. Ser64 carries the post-translational modification Phosphoserine. The MAGE domain maps to 109 to 308 (ISRKMVELVH…ISYPPLHERA (200 aa)).

As to quaternary structure, interacts with TRIM28 and UBE2H. Interacts with HDAC3. Interacts with PML (isoform PML-1, isoform PML-2, isoform PML-3, isoform PML-4 and isoform PML-5). Expressed in many tumors of several types, such as melanoma, head and neck squamous cell carcinoma, lung carcinoma and breast carcinoma, but not in normal tissues except for testes.

The protein localises to the nucleus. The protein resides in the PML body. Its function is as follows. Reduces p53/TP53 transactivation function through recruitment of HDAC3 to p53/TP53 transcription sites. Also represses p73/TP73 activity. Proposed to enhance ubiquitin ligase activity of RING-type zinc finger-containing E3 ubiquitin-protein ligases. In vitro enhances ubiquitin ligase activity of TRIM28 and stimulates p53/TP53 ubiquitination by TRIM28 potentially in presence of Ubl-conjugating enzyme UBE2H. Proposed to act through recruitment and/or stabilization of the Ubl-conjugating enzyme (E2) at the E3:substrate complex. May play a role in embryonal development and tumor transformation or aspects of tumor progression. In vitro promotes cell viability in melanoma cell lines. Antigen recognized on a melanoma by autologous cytolytic T-lymphocytes. Negatively regulates acetylation and sumoylation of PML and represses PML-induced p53/TP53 acetylation and activation. This chain is Melanoma-associated antigen 2 (MAGEA2), found in Homo sapiens (Human).